Reading from the N-terminus, the 350-residue chain is Phenylalanine--tRNA ligase alpha subunit (350 aa).

Glu271 lines the Mg(2+) pocket.

The protein belongs to the class-II aminoacyl-tRNA synthetase family. Phe-tRNA synthetase alpha subunit type 1 subfamily. In terms of assembly, tetramer of two alpha and two beta subunits. Mg(2+) serves as cofactor.

The protein resides in the cytoplasm. The enzyme catalyses tRNA(Phe) + L-phenylalanine + ATP = L-phenylalanyl-tRNA(Phe) + AMP + diphosphate + H(+). The polypeptide is Phenylalanine--tRNA ligase alpha subunit (Paracidovorax citrulli (strain AAC00-1) (Acidovorax citrulli)).